The sequence spans 361 residues: MNGSRALHLSAWLLLCLLCSAAVARDDSCETCRKLVDRFHKGLENTAKKNFGGGNTAWEEKTLSKYESSEIRLVEIIENLCDSSDFECNHMVEEHEEQIEKWWFKMKKKYPDLLKWFCIETIKVCCPPGTYGPDCLACLGGSERPCHGNGFCNGDGTRSGDGLCRCEAEYTGPFCLECADEYFSSERNDTYSLCTACNQACKTCDGPSNEDCKECKNGWIKDDGKCVDLNECASEESPCKDSQYCLNTEGSFLCKECDGSCLGCSGEGPENCKDCATGYVLLAEKCTDVDECDASEQVCSRENETCLNTAGSYKCTCSEGFEDKEGNCVKIMEAENTEVTDGEMGTSASDINISNTAHEDL.

A signal peptide spans 1-24 (MNGSRALHLSAWLLLCLLCSAAVA). Residues 134 to 176 (DCLACLGGSERPCHGNGFCNGDGTRSGDGLCRCEAEYTGPFCL) form the EGF-like 1 domain. 3 disulfides stabilise this stretch: Cys-138–Cys-152, Cys-146–Cys-164, and Cys-166–Cys-175. N-linked (GlcNAc...) asparagine glycosylation is present at Asn-188. 2 FU repeats span residues 191 to 238 (YSLC…EESP) and 251 to 298 (SFLC…SEQV). In terms of domain architecture, EGF-like 2; calcium-binding spans 288–329 (DVDECDASEQVCSRENETCLNTAGSYKCTCSEGFEDKEGNCV). Intrachain disulfides connect Cys-292-Cys-306, Cys-299-Cys-315, and Cys-317-Cys-328. Residue Asn-303 is glycosylated (N-linked (GlcNAc...) asparagine). The disordered stretch occupies residues 341–361 (DGEMGTSASDINISNTAHEDL). A compositionally biased stretch (polar residues) spans 346-361 (TSASDINISNTAHEDL). A glycan (N-linked (GlcNAc...) asparagine) is linked at Asn-352.

This sequence belongs to the CRELD family.

The protein resides in the secreted. The protein localises to the endoplasmic reticulum. In terms of biological role, possible role in neuronal acetylcholine receptor transport. The sequence is that of Cysteine-rich with EGF-like domain protein 2-A (creld2-a) from Xenopus laevis (African clawed frog).